A 360-amino-acid polypeptide reads, in one-letter code: DNA polymerase IV (360 aa).

The 182-residue stretch at 8–189 folds into the UmuC domain; sequence IIHVDMDCFF…LPLEKIPGVG (182 aa). Residues D12 and D107 each coordinate Mg(2+). E108 is a catalytic residue.

The protein belongs to the DNA polymerase type-Y family. Monomer. It depends on Mg(2+) as a cofactor.

The protein resides in the cytoplasm. The enzyme catalyses DNA(n) + a 2'-deoxyribonucleoside 5'-triphosphate = DNA(n+1) + diphosphate. Poorly processive, error-prone DNA polymerase involved in untargeted mutagenesis. Copies undamaged DNA at stalled replication forks, which arise in vivo from mismatched or misaligned primer ends. These misaligned primers can be extended by PolIV. Exhibits no 3'-5' exonuclease (proofreading) activity. May be involved in translesional synthesis, in conjunction with the beta clamp from PolIII. The protein is DNA polymerase IV of Vibrio cholerae serotype O1 (strain ATCC 39541 / Classical Ogawa 395 / O395).